The primary structure comprises 369 residues: Mannose-1-phosphate guanylyltransferase catalytic subunit beta (369 aa).

A substrate-binding domain region spans residues 12–231 (RALILVGGYG…TGFWMDIGQP (220 aa)). D120 contacts GDP-alpha-D-mannose. Mg(2+) is bound at residue D120. K171 is a catalytic residue. Residue D227 coordinates GDP-alpha-D-mannose. Residue D227 coordinates Mg(2+). The interval 254-369 (YTGPGVVGNV…ASVPEPQIIM (116 aa)) is hexapeptide repeat domain.

This sequence belongs to the transferase hexapeptide repeat family. Component of the GMPPA-GMPPB mannose-1-phosphate guanylyltransferase complex composed of 4 Gmppa subunits and 8 Gmppb subunits; the complex is organized into three layers, a central layer made up of 2 Gmppa dimers sandwiched between two layers each made up of 2 Gmppb dimers. Gmppb catalytic activity is reduced when part of the complex and binding of GDP-alpha-D-Mannose by Gmppa induces allosteric feedback inhibition of Gmppb. It depends on Mg(2+) as a cofactor.

It carries out the reaction alpha-D-mannose 1-phosphate + GTP + H(+) = GDP-alpha-D-mannose + diphosphate. The protein operates within nucleotide-sugar biosynthesis; GDP-alpha-D-mannose biosynthesis; GDP-alpha-D-mannose from alpha-D-mannose 1-phosphate (GTP route): step 1/1. Its activity is regulated as follows. Enzyme activity is reduced by incorporation into the GMPPA-GMPPB mannose-1-phosphate guanylyltransferase complex. Allosterically inhibited, when part of the GMPPA-GMPPB complex, by GDP-alpha-D-mannose binding to Gmppa. Functionally, catalytic subunit of the GMPPA-GMPPB mannose-1-phosphate guanylyltransferase complex. Catalyzes the formation of GDP-mannose, an essential precursor of glycan moieties of glycoproteins and glycolipids. Can catalyze the reverse reaction in vitro. Together with GMPPA regulates GDP-alpha-D-mannose levels. In Drosophila melanogaster (Fruit fly), this protein is Mannose-1-phosphate guanylyltransferase catalytic subunit beta.